A 362-amino-acid chain; its full sequence is Protein-glutamate methylesterase/protein-glutamine glutaminase 1 (362 aa).

Residues 10–127 form the Response regulatory domain; that stretch reads RVLVVDDSSF…ADAQRVFREE (118 aa). At Asp61 the chain carries 4-aspartylphosphate. Positions 163-357 constitute a CheB-type methylesterase domain; sequence PRPSQALAGK…LPLTQIGSEI (195 aa). Active-site residues include Ser181, His208, and Asp306.

This sequence belongs to the CheB family. Post-translationally, phosphorylated by CheA. Phosphorylation of the N-terminal regulatory domain activates the methylesterase activity.

It is found in the cytoplasm. The enzyme catalyses [protein]-L-glutamate 5-O-methyl ester + H2O = L-glutamyl-[protein] + methanol + H(+). The catalysed reaction is L-glutaminyl-[protein] + H2O = L-glutamyl-[protein] + NH4(+). Involved in chemotaxis. Part of a chemotaxis signal transduction system that modulates chemotaxis in response to various stimuli. Catalyzes the demethylation of specific methylglutamate residues introduced into the chemoreceptors (methyl-accepting chemotaxis proteins or MCP) by CheR. Also mediates the irreversible deamidation of specific glutamine residues to glutamic acid. The sequence is that of Protein-glutamate methylesterase/protein-glutamine glutaminase 1 from Geobacter sulfurreducens (strain ATCC 51573 / DSM 12127 / PCA).